A 289-amino-acid polypeptide reads, in one-letter code: Dermonecrotic toxin LarSicTox-betaID1 (289 aa).

An N-terminal signal peptide occupies residues 1-2; sequence EG. A propeptide spanning residues 3 to 11 is cleaved from the precursor; that stretch reads AEQDGSERT. The active site involves H22. Mg(2+)-binding residues include E42 and D44. H58 acts as the Nucleophile in catalysis. 2 disulfide bridges follow: C62–C68 and C64–C207. A Mg(2+)-binding site is contributed by D102.

It belongs to the arthropod phospholipase D family. Class II subfamily. Mg(2+) is required as a cofactor. Expressed by the venom gland.

It is found in the secreted. It catalyses the reaction an N-(acyl)-sphingosylphosphocholine = an N-(acyl)-sphingosyl-1,3-cyclic phosphate + choline. It carries out the reaction N-hexanoyl-sphing-4-enine-1-phosphocholine = N-(hexanoyl)-sphing-4-enine-1,3-cyclic phosphate + choline. The catalysed reaction is N-(dodecanoyl)-sphing-4-enine-1-phosphocholine = N-dodecanoyl-sphing-4-enine-1,3-cyclic phosphate + choline. The enzyme catalyses an N-(acyl)-sphingosylphosphoethanolamine = an N-(acyl)-sphingosyl-1,3-cyclic phosphate + ethanolamine. It catalyses the reaction N-dodecanoyl-heptadecasphing-4-enine-1-phosphoethanolamine = N-dodecanoyl-heptadecasphing-4-enine-1,3-cyclic phosphate + ethanolamine. It carries out the reaction a 1-acyl-sn-glycero-3-phosphocholine = a 1-acyl-sn-glycero-2,3-cyclic phosphate + choline. The catalysed reaction is 1-tetradecanoyl-sn-glycero-3-phosphocholine = 1-tetradecanoyl-sn-glycero-2,3-cyclic phosphate + choline. The enzyme catalyses 1-octanoyl-sn-glycero-3-phosphocholine = 1-octanoyl-sn-glycero-2,3-cyclic phosphate + choline. It catalyses the reaction a 1-acyl-sn-glycero-3-phosphoethanolamine = a 1-acyl-sn-glycero-2,3-cyclic phosphate + ethanolamine. It carries out the reaction 1-tetradecanoyl-sn-glycero-3-phosphoethanolamine = 1-tetradecanoyl-sn-glycero-2,3-cyclic phosphate + ethanolamine. Functionally, dermonecrotic toxins cleave the phosphodiester linkage between the phosphate and headgroup of certain phospholipids (sphingolipid and lysolipid substrates), forming an alcohol (often choline) and a cyclic phosphate. This toxin acts on sphingomyelin (SM) and on ceramide phosphoethanolamine (CPE) with high activity. It also acts on lysophosphatidylcholine (LPC) and on lysophosphatidylethanolamine (LPE) with moderate activity. It is not active on lysophosphatidylserine (LPS), and lysophosphatidylglycerol (LPG). It acts by transphosphatidylation, releasing exclusively cyclic phosphate as second products. It is not surprising that spider toxins have affinity for ethanolamine-containing sphingolipids since they are common in insect prey. On mammals, induces dermonecrosis, hemolysis, increased vascular permeability, edema, inflammatory response, and platelet aggregation. This chain is Dermonecrotic toxin LarSicTox-betaID1, found in Loxosceles arizonica (Arizona brown spider).